We begin with the raw amino-acid sequence, 104 residues long: Pyrimidine/purine nucleoside phosphorylase (104 aa).

This sequence belongs to the nucleoside phosphorylase PpnP family.

The catalysed reaction is a purine D-ribonucleoside + phosphate = a purine nucleobase + alpha-D-ribose 1-phosphate. The enzyme catalyses adenosine + phosphate = alpha-D-ribose 1-phosphate + adenine. It catalyses the reaction cytidine + phosphate = cytosine + alpha-D-ribose 1-phosphate. It carries out the reaction guanosine + phosphate = alpha-D-ribose 1-phosphate + guanine. The catalysed reaction is inosine + phosphate = alpha-D-ribose 1-phosphate + hypoxanthine. The enzyme catalyses thymidine + phosphate = 2-deoxy-alpha-D-ribose 1-phosphate + thymine. It catalyses the reaction uridine + phosphate = alpha-D-ribose 1-phosphate + uracil. It carries out the reaction xanthosine + phosphate = alpha-D-ribose 1-phosphate + xanthine. In terms of biological role, catalyzes the phosphorolysis of diverse nucleosides, yielding D-ribose 1-phosphate and the respective free bases. Can use uridine, adenosine, guanosine, cytidine, thymidine, inosine and xanthosine as substrates. Also catalyzes the reverse reactions. This chain is Pyrimidine/purine nucleoside phosphorylase, found in Geobacter metallireducens (strain ATCC 53774 / DSM 7210 / GS-15).